Consider the following 937-residue polypeptide: Leucine--tRNA ligase (937 aa).

Positions 34-44 (PYPSGAMHIGH) match the 'HIGH' region motif. Residues 609–613 (KMSSS) carry the 'KMSKS' region motif.

It belongs to the class-I aminoacyl-tRNA synthetase family.

It is found in the cytoplasm. The enzyme catalyses tRNA(Leu) + L-leucine + ATP = L-leucyl-tRNA(Leu) + AMP + diphosphate. The polypeptide is Leucine--tRNA ligase (Methanothermobacter thermautotrophicus (strain ATCC 29096 / DSM 1053 / JCM 10044 / NBRC 100330 / Delta H) (Methanobacterium thermoautotrophicum)).